The sequence spans 190 residues: Guanylate kinase (190 aa).

In terms of domain architecture, Guanylate kinase-like spans 8-186 (ARPTVLTGPS…ALAELEKQMN (179 aa)). 15–22 (GPSGVGKG) contacts ATP.

The protein belongs to the guanylate kinase family.

Its subcellular location is the cytoplasm. The catalysed reaction is GMP + ATP = GDP + ADP. It carries out the reaction dZMP + ATP = dZDP + ADP. The protein operates within purine metabolism. In terms of biological role, essential for recycling GMP and indirectly, cGMP. (Microbial infection) Catalyzes the phosphorylation of dZMP to dZDP, when the bacterium is infected by a phage that produces the substrate for the synthesis of dZTP (2- amino-2'-deoxyadenosine 5'-triphosphate), which is then used by the phage as a DNA polymerase substrate. The sequence is that of Guanylate kinase from Synechococcus sp. (strain CC9311).